Here is a 91-residue protein sequence, read N- to C-terminus: Protein transport protein Sec61 subunit beta (91 aa).

The segment at 1–45 is disordered; it reads MSTSAQVPGGPAAQMKRRNNAQRQEAKASQRPTSTRSVGAGGSSS. At 1-62 the chain is on the cytoplasmic side; that stretch reads MSTSAQVPGG…DESQGLKVDP (62 aa). Positions 30-45 are enriched in polar residues; it reads QRPTSTRSVGAGGSSS. The helical transmembrane segment at 63–83 threads the bilayer; sequence VVVMVLSLGFIFSVVALHILA.

This sequence belongs to the SEC61-beta family. In terms of assembly, heterotrimeric complex composed of SEC61, SEB1 and SSS1.

Its subcellular location is the endoplasmic reticulum membrane. Its function is as follows. Necessary for protein translocation in the endoplasmic reticulum. The chain is Protein transport protein Sec61 subunit beta (SBH1) from Yarrowia lipolytica (strain CLIB 122 / E 150) (Yeast).